We begin with the raw amino-acid sequence, 467 residues long: Gamma-aminobutyric acid receptor subunit gamma-3 (467 aa).

A signal peptide spans 1–17; that stretch reads MAAKLLLLLCLFSGLHA. The Extracellular portion of the chain corresponds to 18–256; sequence RSRRVEEDDS…FELSRRMGYF (239 aa). Residue asparagine 110 is glycosylated (N-linked (GlcNAc...) asparagine). Cysteines 171 and 185 form a disulfide. Asparagine 228 carries an N-linked (GlcNAc...) asparagine glycan. The chain crosses the membrane as a helical span at residues 257–277; sequence TIQTYIPCILTVVLSWVSFWI. The Cytoplasmic segment spans residues 278-283; that stretch reads KKDATP. Residues 284 to 303 form a helical membrane-spanning segment; it reads ARTTLGITTVLTMTTLSTIA. Topologically, residues 304–311 are extracellular; sequence RKSLPRVS. Residues 312-332 traverse the membrane as a helical segment; sequence YVTAMDLFVTVCFLFVFAALM. Residues 333–446 lie on the Cytoplasmic side of the membrane; that stretch reads EYATLNYYSS…DVSELDSYSR (114 aa). Residues 447–467 traverse the membrane as a helical segment; that stretch reads VFFPTSFLLFNLVYWVGYLYL.

Belongs to the ligand-gated ion channel (TC 1.A.9) family. Gamma-aminobutyric acid receptor (TC 1.A.9.5) subfamily. GABRG3 sub-subfamily. Heteropentamer, formed by a combination of alpha (GABRA1-6), beta (GABRB1-3), gamma (GABRG1-3), delta (GABRD), epsilon (GABRE), rho (GABRR1-3), pi (GABRP) and theta (GABRQ) chains, each subunit exhibiting distinct physiological and pharmacological properties. In terms of processing, may be palmitoylated. In terms of tissue distribution, expressed in brain.

The protein localises to the postsynaptic cell membrane. It localises to the cell membrane. It catalyses the reaction chloride(in) = chloride(out). With respect to regulation, allosterically potentiated by alphaxalone. Allosterically inhibited by pregnenolone sulfate. Inhibited by zinc and lanthanum. Gamma subunit of the heteropentameric ligand-gated chloride channel gated by gamma-aminobutyric acid (GABA), a major inhibitory neurotransmitter in the brain. GABA-gated chloride channels, also named GABA(A) receptors (GABAAR), consist of five subunits arranged around a central pore and contain GABA active binding site(s) located at the alpha and beta subunit interface(s). When activated by GABA, GABAARs selectively allow the flow of chloride across the cell membrane down their electrochemical gradient. This is Gamma-aminobutyric acid receptor subunit gamma-3 from Rattus norvegicus (Rat).